Reading from the N-terminus, the 526-residue chain is MFS-type transporter clz19 (526 aa).

The segment at 1-49 (MNVDTTSPQAPLAGVESKQDGASNEATAKAESTTHDQNESSSFDERPVH) is disordered. The span at 32–49 (STTHDQNESSSFDERPVH) shows a compositional bias: basic and acidic residues. Residue asparagine 38 is glycosylated (N-linked (GlcNAc...) asparagine). The chain crosses the membrane as a helical span at residues 59-79 (ALLAVASFAAAISPASTTTYY). Asparagine 97 is a glycosylation site (N-linked (GlcNAc...) asparagine). 3 consecutive transmembrane segments (helical) span residues 126–143 (VYLVSLSINMAANLGLAL), 186–206 (AYLTLGLVMGPALGPLIGGLL), and 214–234 (AIFWFLMILGGFFFLMVLTFF). N-linked (GlcNAc...) asparagine glycans are attached at residues asparagine 238 and asparagine 253. 6 helical membrane passes run 294–314 (FIVCMYGALLFGGYASVISIF), 322–342 (YGYSQVQVGLCYLPFGVGSIL), 384–404 (LTVSFPMIFATCGFVVAYGWL), 411–431 (VASVLVVVFLIANVFTGVLIA), 446–466 (ALGAAMNLTRCLMGAGGVAAV), and 473–493 (IGIGYTATATAGVWVVTLPAL).

It belongs to the major facilitator superfamily.

It localises to the membrane. Its function is as follows. MFS-type transporter; part of the gene cluster that mediates the biosynthesis of squalestatin S1 (SQS1, also known as zaragozic acid A), a heavily oxidized fungal polyketide that offers potent cholesterol lowering activity by targeting squalene synthase (SS). This chain is MFS-type transporter clz19, found in Cochliobolus lunatus (Filamentous fungus).